Reading from the N-terminus, the 239-residue chain is Fatty acid metabolism regulator protein (239 aa).

Residues Gln-6–Phe-74 form the HTH gntR-type domain. The segment at residues Glu-34–Gln-53 is a DNA-binding region (H-T-H motif).

Homodimer.

It is found in the cytoplasm. Its function is as follows. Multifunctional regulator of fatty acid metabolism. In Salmonella paratyphi C (strain RKS4594), this protein is Fatty acid metabolism regulator protein.